The primary structure comprises 733 residues: Ribosomal protein S6 kinase alpha-2 (733 aa).

The Protein kinase 1 domain occupies 59–318 (FELLKVLGQG…VEEIKRHPFF (260 aa)). ATP is bound by residues 65–73 (LGQGSYGKV) and Lys91. Residue Asp184 is the Proton acceptor of the active site. Phosphoserine; by PDPK1 is present on Ser218. The AGC-kinase C-terminal domain occupies 319–388 (VTIDWNKLYR…VASSLVQEPS (70 aa)). A Phosphoserine modification is found at Ser377. The 258-residue stretch at 415 to 672 (YEIKEDIGVG…AVQVLKHPWI (258 aa)) folds into the Protein kinase 2 domain. ATP is bound by residues 421–429 (IGVGSYSVC) and Lys444. The Proton acceptor role is filled by Asp532.

It belongs to the protein kinase superfamily. AGC Ser/Thr protein kinase family. S6 kinase subfamily. In terms of assembly, forms a complex with either MAPK1/ERK2 or MAPK3/ERK1 in quiescent cells. Transiently dissociates following mitogenic stimulation. Interacts with FBXO5; cooperate to induce the metaphase arrest of early blastomeres; increases and stabilizes interaction of FBXO5 with CDC20. It depends on Mg(2+) as a cofactor. Activated by phosphorylation at Ser-218 by PDPK1. Autophosphorylated on Ser-377, as part of the activation process. May be phosphorylated at Thr-356 and Ser-360 by MAPK1/ERK2 and MAPK3/ERK1. In terms of processing, N-terminal myristoylation results in an activated kinase in the absence of added growth factors.

It localises to the nucleus. The protein localises to the cytoplasm. The enzyme catalyses L-seryl-[protein] + ATP = O-phospho-L-seryl-[protein] + ADP + H(+). It carries out the reaction L-threonyl-[protein] + ATP = O-phospho-L-threonyl-[protein] + ADP + H(+). Upon extracellular signal or mitogen stimulation, phosphorylated at Thr-570 in the C-terminal kinase domain (CTKD) by MAPK1/ERK2 and MAPK3/ERK1. The activated CTKD then autophosphorylates Ser-377, allowing binding of PDPK1, which in turn phosphorylates Ser-218 in the N-terminal kinase domain (NTDK) leading to the full activation of the protein and subsequent phosphorylation of the substrates by the NTKD. Its function is as follows. Serine/threonine-protein kinase that acts downstream of ERK (MAPK1/ERK2 and MAPK3/ERK1) signaling and mediates mitogenic and stress-induced activation of transcription factors, regulates translation, and mediates cellular proliferation, survival, and differentiation. May function as tumor suppressor in epithelial ovarian cancer cells. The sequence is that of Ribosomal protein S6 kinase alpha-2 (Rps6ka2) from Mus musculus (Mouse).